The chain runs to 513 residues: Fumarate reductase (513 aa).

41–55 lines the FAD pocket; sequence AIVIGGGLAGLSATN. The residue at position 100 (Ser-100) is a Phosphoserine. Residues His-288 and Arg-311 contribute to the active site.

This sequence belongs to the FAD-dependent oxidoreductase 2 family. FRD/SDH subfamily. FAD is required as a cofactor.

It localises to the cytoplasm. Its subcellular location is the mitochondrion. The protein localises to the nucleus. The catalysed reaction is succinate + NAD(+) = fumarate + NADH + H(+). Functionally, irreversibly catalyzes the reduction of fumarate to succinate. The polypeptide is Fumarate reductase (osm1) (Schizosaccharomyces pombe (strain 972 / ATCC 24843) (Fission yeast)).